A 250-amino-acid polypeptide reads, in one-letter code: uncharacterized protein (250 aa).

The signal sequence occupies residues 1–19 (MAKPRNAAESKAAKAQANA). Transmembrane regions (helical) follow at residues 51–71 (IGAF…AGGF) and 73–93 (MFTM…VIFG). Positions 226–250 (AGVMPKGPLPTTAKMRSVQRTVRRK) are disordered.

Its subcellular location is the cell membrane. This is an uncharacterized protein from Mycobacterium tuberculosis (strain CDC 1551 / Oshkosh).